A 53-amino-acid polypeptide reads, in one-letter code: UPF0391 membrane protein ETA_06630 (53 aa).

A run of 2 helical transmembrane segments spans residues 4-24 and 27-47; these read WGII…GGLA and AAWA…ISLF.

This sequence belongs to the UPF0391 family.

It localises to the cell membrane. This chain is UPF0391 membrane protein ETA_06630, found in Erwinia tasmaniensis (strain DSM 17950 / CFBP 7177 / CIP 109463 / NCPPB 4357 / Et1/99).